A 78-amino-acid chain; its full sequence is Protein SlyX homolog (78 aa).

It belongs to the SlyX family.

This chain is Protein SlyX homolog, found in Xanthomonas oryzae pv. oryzae (strain MAFF 311018).